The primary structure comprises 113 residues: T cell receptor alpha variable 8-1 (113 aa).

Positions 1–20 (MLLLLIPVLGMIFALRDARA) are cleaved as a signal peptide. Residues 21 to 113 (QSVSQHNHHV…DTAEYFCAVN (93 aa)) enclose the Ig-like domain. A disulfide bridge links C42 with C110. The N-linked (GlcNAc...) asparagine glycan is linked to N43.

As to quaternary structure, alpha-beta TR is a heterodimer composed of an alpha and beta chain; disulfide-linked. The alpha-beta TR is associated with the transmembrane signaling CD3 coreceptor proteins to form the TR-CD3 (TcR or TCR). The assembly of alpha-beta TR heterodimers with CD3 occurs in the endoplasmic reticulum where a single alpha-beta TR heterodimer associates with one CD3D-CD3E heterodimer, one CD3G-CD3E heterodimer and one CD247 homodimer forming a stable octameric structure. CD3D-CD3E and CD3G-CD3E heterodimers preferentially associate with TR alpha and TR beta chains, respectively. The association of the CD247 homodimer is the last step of TcR assembly in the endoplasmic reticulum and is required for transport to the cell surface.

Its subcellular location is the cell membrane. Functionally, v region of the variable domain of T cell receptor (TR) alpha chain that participates in the antigen recognition. Alpha-beta T cell receptors are antigen specific receptors which are essential to the immune response and are present on the cell surface of T lymphocytes. Recognize peptide-major histocompatibility (MH) (pMH) complexes that are displayed by antigen presenting cells (APC), a prerequisite for efficient T cell adaptive immunity against pathogens. Binding of alpha-beta TR to pMH complex initiates TR-CD3 clustering on the cell surface and intracellular activation of LCK that phosphorylates the ITAM motifs of CD3G, CD3D, CD3E and CD247 enabling the recruitment of ZAP70. In turn ZAP70 phosphorylates LAT, which recruits numerous signaling molecules to form the LAT signalosome. The LAT signalosome propagates signal branching to three major signaling pathways, the calcium, the mitogen-activated protein kinase (MAPK) kinase and the nuclear factor NF-kappa-B (NF-kB) pathways, leading to the mobilization of transcription factors that are critical for gene expression and essential for T cell growth and differentiation. The T cell repertoire is generated in the thymus, by V-(D)-J rearrangement. This repertoire is then shaped by intrathymic selection events to generate a peripheral T cell pool of self-MH restricted, non-autoaggressive T cells. Post-thymic interaction of alpha-beta TR with the pMH complexes shapes TR structural and functional avidity. In Homo sapiens (Human), this protein is T cell receptor alpha variable 8-1.